The chain runs to 156 residues: Aspercryptin biosynthesis cluster protein B (156 aa).

Positions 1–39 (MRMANRIGAGRKSALQLSHLRTRLTSSAAAVATAPTLDP) are cleaved as a signal peptide.

Belongs to the YciI family.

It functions in the pathway secondary metabolite biosynthesis. Its function is as follows. Part of the gene cluster that mediates the biosynthesis of aspercryptins, linear lipopeptides built from six amino acids including 2 highly unusual and nonproteogenic amino acids, 2-amino-octanoic acid (2aoa) and 2-amino-dodecanol (2adol). The core structure of aspercryptins is as follows: Ser/Ala-Thr-Ile/Val-2aoa-Aasn-2adol. The first step of aspercryptin biosynthesis is the generation of the fatty acid precursors, octanoic and dodecanoic acids, by the FAS subunits atnF and atnM. The fatty acid precursors are likely transformed into the corresponding alpha-amino fatty acids in three steps. First, they are hydroxylated by the cytochrome P450 monooxygenase atnE, then oxidized to the corresponding alpha-keto acids by the NAD(P)-dependent oxidoreductase atnD, and finally converted to the alpha-amino fatty acids by the PLP-dependent aminotransferases atnH or atnJ. the alpha-amino fatty acids, 2-amino-octanoic and 2-amino-dodecanoic acids, are recognized, activated, and covalently tethered to the NRPS atnA by its fourth and sixth adenylation domains. The second module of atnA is the Thr module and contains an epimerase (E) domain responsible for the epimerization of Thr to D-allo-Thr. Additionally, despite atnA having only one epimerase domain, the first amino acid of aspercryptin A1 is D-Ser, suggesting that serine is either loaded directly as D-Ser on the first module or that the epimerase domain in the threonine module epimerizes both L-Ser and L-Thr. After condensation of the hexapeptide of aspercryptin, the C-terminal reductase (TE) domain might be involved in the reductive release and production of the aldehyde hexapeptide. Further reduction would generate aspercryptins. The variety of aspercryptins produced reflects the flexibility of the atnA NRPS, allowing incorporation of alanine instead of serine, valine for isoleucine, and a C10 fatty amino alcohol instead of the C12 version. AtnB seems to be involved in the selectivity for Ile versus Val by the third module. Moreover, type B, C and D aspercryptins have an additional N-terminal cichorine, acetyl and propionyl group respectively. This is Aspercryptin biosynthesis cluster protein B from Emericella nidulans (strain FGSC A4 / ATCC 38163 / CBS 112.46 / NRRL 194 / M139) (Aspergillus nidulans).